Reading from the N-terminus, the 294-residue chain is 2-dehydropantoate 2-reductase (294 aa).

Residues 10–15 (GAGALG), Arg-34, Lys-74, Asn-98, and Ala-122 each bind NADP(+). The Proton donor role is filled by Lys-178. Substrate is bound by residues Lys-178, Asn-182, Asn-186, Asn-196, and 243 to 246 (NRSS). Glu-258 contacts NADP(+).

The protein belongs to the ketopantoate reductase family.

It is found in the cytoplasm. The catalysed reaction is (R)-pantoate + NAD(+) = 2-dehydropantoate + NADH + H(+). It catalyses the reaction (R)-pantoate + NADP(+) = 2-dehydropantoate + NADPH + H(+). The protein operates within cofactor biosynthesis; coenzyme A biosynthesis. Its function is as follows. Catalyzes the NAD(P)H-dependent reduction of ketopantoate into pantoic acid. This is 2-dehydropantoate 2-reductase from Archaeoglobus fulgidus (strain ATCC 49558 / DSM 4304 / JCM 9628 / NBRC 100126 / VC-16).